A 285-amino-acid chain; its full sequence is Transmembrane protein 158 (285 aa).

An N-terminal signal peptide occupies residues 1 to 20 (MLPLLAALLAAACPLPPARG). The interval 20-43 (GGATDAPGLSGTPPNASANASFTG) is disordered. Over residues 31 to 43 (TPPNASANASFTG) the composition is skewed to polar residues. The N-linked (GlcNAc...) asparagine glycan is linked to asparagine 73. 2 consecutive transmembrane segments (helical) span residues 215-235 (LVIVVWSVAALIWPVPIIAGF) and 263-283 (AAAAAAAAAAAAAAAVTSGVA).

The protein belongs to the TMEM158 family. N-glycosylated. In terms of tissue distribution, detected only in the brain.

The protein resides in the membrane. Functionally, receptor for brain injury-derived neurotrophic peptide (BINP), a synthetic 13-mer peptide. The chain is Transmembrane protein 158 (Tmem158) from Rattus norvegicus (Rat).